The sequence spans 253 residues: Triosephosphate isomerase (253 aa).

Substrate is bound at residue 9–11 (NWK). Residue His95 is the Electrophile of the active site. Glu167 serves as the catalytic Proton acceptor. Residues Gly173, Ser213, and 234-235 (GG) contribute to the substrate site. The residue at position 213 (Ser213) is a Phosphoserine.

The protein belongs to the triosephosphate isomerase family. In terms of assembly, homodimer.

It localises to the cytoplasm. It carries out the reaction D-glyceraldehyde 3-phosphate = dihydroxyacetone phosphate. The protein operates within carbohydrate biosynthesis; gluconeogenesis. It participates in carbohydrate degradation; glycolysis; D-glyceraldehyde 3-phosphate from glycerone phosphate: step 1/1. Involved in the gluconeogenesis. Catalyzes stereospecifically the conversion of dihydroxyacetone phosphate (DHAP) to D-glyceraldehyde-3-phosphate (G3P). The chain is Triosephosphate isomerase from Bacillus velezensis (strain DSM 23117 / BGSC 10A6 / LMG 26770 / FZB42) (Bacillus amyloliquefaciens subsp. plantarum).